The sequence spans 886 residues: Alanine--tRNA ligase (886 aa).

The Zn(2+) site is built by H564, H568, C666, and H670.

This sequence belongs to the class-II aminoacyl-tRNA synthetase family. Requires Zn(2+) as cofactor.

The protein localises to the cytoplasm. It carries out the reaction tRNA(Ala) + L-alanine + ATP = L-alanyl-tRNA(Ala) + AMP + diphosphate. Functionally, catalyzes the attachment of alanine to tRNA(Ala) in a two-step reaction: alanine is first activated by ATP to form Ala-AMP and then transferred to the acceptor end of tRNA(Ala). Also edits incorrectly charged Ser-tRNA(Ala) and Gly-tRNA(Ala) via its editing domain. The polypeptide is Alanine--tRNA ligase (Prochlorococcus marinus subsp. pastoris (strain CCMP1986 / NIES-2087 / MED4)).